A 426-amino-acid polypeptide reads, in one-letter code: 3-phosphoshikimate 1-carboxyvinyltransferase (426 aa).

3-phosphoshikimate contacts are provided by K23, S24, and R28. Position 23 (K23) interacts with phosphoenolpyruvate. Positions 96 and 124 each coordinate phosphoenolpyruvate. Residues T170, S171, Q172, S198, D314, and K341 each coordinate 3-phosphoshikimate. A phosphoenolpyruvate-binding site is contributed by Q172. The Proton acceptor role is filled by D314. Phosphoenolpyruvate is bound by residues R345, R386, and K411.

This sequence belongs to the EPSP synthase family. In terms of assembly, monomer.

It localises to the cytoplasm. It catalyses the reaction 3-phosphoshikimate + phosphoenolpyruvate = 5-O-(1-carboxyvinyl)-3-phosphoshikimate + phosphate. The protein operates within metabolic intermediate biosynthesis; chorismate biosynthesis; chorismate from D-erythrose 4-phosphate and phosphoenolpyruvate: step 6/7. Catalyzes the transfer of the enolpyruvyl moiety of phosphoenolpyruvate (PEP) to the 5-hydroxyl of shikimate-3-phosphate (S3P) to produce enolpyruvyl shikimate-3-phosphate and inorganic phosphate. This chain is 3-phosphoshikimate 1-carboxyvinyltransferase, found in Trichormus variabilis (strain ATCC 29413 / PCC 7937) (Anabaena variabilis).